The sequence spans 224 residues: UPF0758 protein Mmwyl1_0624 (224 aa).

The MPN domain maps to 102–224; that stretch reads VFASAEHVRT…PVSLAERGLV (123 aa). Residues His-173, His-175, and Asp-186 each contribute to the Zn(2+) site. The short motif at 173–186 is the JAMM motif element; it reads HNHPSGIAEPSQAD.

Belongs to the UPF0758 family.

The chain is UPF0758 protein Mmwyl1_0624 from Marinomonas sp. (strain MWYL1).